Reading from the N-terminus, the 450-residue chain is tRNA modification GTPase MnmE (450 aa).

(6S)-5-formyl-5,6,7,8-tetrahydrofolate is bound by residues R23, E81, and K120. Residues 216 to 373 (GIHLVLAGKP…LLKKIATLAG (158 aa)) enclose the TrmE-type G domain. GTP is bound by residues 226 to 231 (NAGKSS), 245 to 251 (TPQAGTT), 270 to 273 (DTAG), and 337 to 340 (NKAD). Positions 230 and 251 each coordinate Mg(2+). Residue K450 participates in (6S)-5-formyl-5,6,7,8-tetrahydrofolate binding.

This sequence belongs to the TRAFAC class TrmE-Era-EngA-EngB-Septin-like GTPase superfamily. TrmE GTPase family. Homodimer. Heterotetramer of two MnmE and two MnmG subunits. The cofactor is K(+).

It localises to the cytoplasm. Exhibits a very high intrinsic GTPase hydrolysis rate. Involved in the addition of a carboxymethylaminomethyl (cmnm) group at the wobble position (U34) of certain tRNAs, forming tRNA-cmnm(5)s(2)U34. In Dichelobacter nodosus (strain VCS1703A), this protein is tRNA modification GTPase MnmE.